We begin with the raw amino-acid sequence, 640 residues long: 1-deoxy-D-xylulose-5-phosphate synthase (640 aa).

Thiamine diphosphate contacts are provided by residues His75 and 117–119 (GHA). Position 146 (Asp146) interacts with Mg(2+). Residues 147-148 (AA), Asn175, and Glu370 each bind thiamine diphosphate. Position 175 (Asn175) interacts with Mg(2+).

Belongs to the transketolase family. DXPS subfamily. As to quaternary structure, homodimer. Mg(2+) serves as cofactor. Requires thiamine diphosphate as cofactor.

The enzyme catalyses D-glyceraldehyde 3-phosphate + pyruvate + H(+) = 1-deoxy-D-xylulose 5-phosphate + CO2. It participates in metabolic intermediate biosynthesis; 1-deoxy-D-xylulose 5-phosphate biosynthesis; 1-deoxy-D-xylulose 5-phosphate from D-glyceraldehyde 3-phosphate and pyruvate: step 1/1. Catalyzes the acyloin condensation reaction between C atoms 2 and 3 of pyruvate and glyceraldehyde 3-phosphate to yield 1-deoxy-D-xylulose-5-phosphate (DXP). This Chlamydia trachomatis serovar L2 (strain ATCC VR-902B / DSM 19102 / 434/Bu) protein is 1-deoxy-D-xylulose-5-phosphate synthase.